A 347-amino-acid polypeptide reads, in one-letter code: Quinolinate synthase (347 aa).

His47 and Ser68 together coordinate iminosuccinate. Residue Cys113 coordinates [4Fe-4S] cluster. Residues 139–141 and Ser156 each bind iminosuccinate; that span reads YAN. Cys200 is a binding site for [4Fe-4S] cluster. Residues 226–228 and Thr243 contribute to the iminosuccinate site; that span reads HPE. Position 297 (Cys297) interacts with [4Fe-4S] cluster.

It belongs to the quinolinate synthase family. Type 1 subfamily. [4Fe-4S] cluster is required as a cofactor.

Its subcellular location is the cytoplasm. The catalysed reaction is iminosuccinate + dihydroxyacetone phosphate = quinolinate + phosphate + 2 H2O + H(+). It functions in the pathway cofactor biosynthesis; NAD(+) biosynthesis; quinolinate from iminoaspartate: step 1/1. In terms of biological role, catalyzes the condensation of iminoaspartate with dihydroxyacetone phosphate to form quinolinate. This is Quinolinate synthase from Salmonella typhi.